Here is a 398-residue protein sequence, read N- to C-terminus: Pectate lyase 1 (398 aa).

An N-terminal signal peptide occupies residues 1 to 25 (MGIKHCCYILYFTLALVTLLQPVRS). N-linked (GlcNAc...) asparagine glycosylation occurs at asparagine 37. Cysteine 55 and cysteine 72 form a disulfide bridge. Positions 195, 219, and 223 each coordinate Ca(2+). Arginine 275 is a catalytic residue.

This sequence belongs to the polysaccharide lyase 1 family. Amb a subfamily. In terms of assembly, monomer. Ca(2+) is required as a cofactor. Post-translationally, the N-terminus is blocked. In terms of tissue distribution, pollen and flowers.

The catalysed reaction is Eliminative cleavage of (1-&gt;4)-alpha-D-galacturonan to give oligosaccharides with 4-deoxy-alpha-D-galact-4-enuronosyl groups at their non-reducing ends.. The protein operates within glycan metabolism; pectin degradation; 2-dehydro-3-deoxy-D-gluconate from pectin: step 2/5. In terms of biological role, has pectate lyase activity. The chain is Pectate lyase 1 from Ambrosia artemisiifolia (Common ragweed).